Here is a 577-residue protein sequence, read N- to C-terminus: Aspartate--tRNA(Asp/Asn) ligase (577 aa).

Position 171 (glutamate 171) interacts with L-aspartate. The aspartate stretch occupies residues 195–198 (QLFK). L-aspartate is bound at residue arginine 217. ATP-binding positions include 217-219 (RDE) and glutamine 226. Histidine 444 contacts L-aspartate. Glutamate 474 contributes to the ATP binding site. Arginine 481 serves as a coordination point for L-aspartate. ATP is bound at residue 526–529 (GFDR).

This sequence belongs to the class-II aminoacyl-tRNA synthetase family. Type 1 subfamily. Homodimer.

It localises to the cytoplasm. The enzyme catalyses tRNA(Asx) + L-aspartate + ATP = L-aspartyl-tRNA(Asx) + AMP + diphosphate. Its function is as follows. Aspartyl-tRNA synthetase with relaxed tRNA specificity since it is able to aspartylate not only its cognate tRNA(Asp) but also tRNA(Asn). Reaction proceeds in two steps: L-aspartate is first activated by ATP to form Asp-AMP and then transferred to the acceptor end of tRNA(Asp/Asn). This is Aspartate--tRNA(Asp/Asn) ligase from Helicobacter pylori (strain Shi470).